The following is a 513-amino-acid chain: ATP synthase subunit alpha (513 aa).

169–176 (GDRQIGKT) contributes to the ATP binding site.

Belongs to the ATPase alpha/beta chains family. F-type ATPases have 2 components, CF(1) - the catalytic core - and CF(0) - the membrane proton channel. CF(1) has five subunits: alpha(3), beta(3), gamma(1), delta(1), epsilon(1). CF(0) has three main subunits: a(1), b(2) and c(9-12). The alpha and beta chains form an alternating ring which encloses part of the gamma chain. CF(1) is attached to CF(0) by a central stalk formed by the gamma and epsilon chains, while a peripheral stalk is formed by the delta and b chains.

It is found in the cell inner membrane. The catalysed reaction is ATP + H2O + 4 H(+)(in) = ADP + phosphate + 5 H(+)(out). Produces ATP from ADP in the presence of a proton gradient across the membrane. The alpha chain is a regulatory subunit. The protein is ATP synthase subunit alpha of Shewanella halifaxensis (strain HAW-EB4).